Consider the following 825-residue polypeptide: Exocyst complex component SEC10a (825 aa).

Positions 244-266 (RGLEVAVANLQDYCNELENRLLS) form a coiled coil.

This sequence belongs to the SEC10 family. The exocyst complex is composed of SEC3, SEC5, SEC6, SEC8, SEC10, EXO70A1 and EXO84B. Interacts with EXO84B. Binds to EXO70E2. Binds directly to B1L. As to expression, expressed in seedlings, roots, leaves and flowers.

The protein localises to the cytoplasm. The protein resides in the cytosol. It localises to the secreted. Its subcellular location is the extracellular exosome. Functionally, component of the exocyst complex involved in the docking of exocytic vesicles with fusion sites on the plasma membrane during regulated or polarized secretion. Involved in polarized cell growth and organ morphogenesis. During cytokinesis, involved in cell plate initiation, cell plate maturation and formation of new primary cell wall. This is Exocyst complex component SEC10a from Arabidopsis thaliana (Mouse-ear cress).